The chain runs to 372 residues: Spermidine/putrescine import ATP-binding protein PotA (372 aa).

The region spanning 12–242 (IQLKGLNKSF…PTNLFVARFI (231 aa)) is the ABC transporter domain. 44–51 (GPSGCGKT) lines the ATP pocket.

It belongs to the ABC transporter superfamily. Spermidine/putrescine importer (TC 3.A.1.11.1) family. The complex is composed of two ATP-binding proteins (PotA), two transmembrane proteins (PotB and PotC) and a solute-binding protein (PotD).

It is found in the cell inner membrane. It catalyses the reaction ATP + H2O + polyamine-[polyamine-binding protein]Side 1 = ADP + phosphate + polyamineSide 2 + [polyamine-binding protein]Side 1.. Functionally, part of the ABC transporter complex PotABCD involved in spermidine/putrescine import. Responsible for energy coupling to the transport system. This Photobacterium profundum (strain SS9) protein is Spermidine/putrescine import ATP-binding protein PotA.